A 662-amino-acid chain; its full sequence is UvrABC system protein B (662 aa).

In terms of domain architecture, Helicase ATP-binding spans 25-412; sequence EGIEKGLKMQ…SQKIVEQIIR (388 aa). An ATP-binding site is contributed by 38 to 45; the sequence is GVTGSGKT. The short motif at 91–114 is the Beta-hairpin element; sequence YYDYYQPEAYLPATDTYIEKDSAI. The Helicase C-terminal domain maps to 429 to 595; the sequence is QVDDLYGEIK…TVQKAVRDVI (167 aa). The UVR domain occupies 622–657; it reads KQYVEKLTREMKEAAKALEFEKAAMLRDLIIELRAQ.

This sequence belongs to the UvrB family. As to quaternary structure, forms a heterotetramer with UvrA during the search for lesions. Interacts with UvrC in an incision complex.

The protein localises to the cytoplasm. Its function is as follows. The UvrABC repair system catalyzes the recognition and processing of DNA lesions. A damage recognition complex composed of 2 UvrA and 2 UvrB subunits scans DNA for abnormalities. Upon binding of the UvrA(2)B(2) complex to a putative damaged site, the DNA wraps around one UvrB monomer. DNA wrap is dependent on ATP binding by UvrB and probably causes local melting of the DNA helix, facilitating insertion of UvrB beta-hairpin between the DNA strands. Then UvrB probes one DNA strand for the presence of a lesion. If a lesion is found the UvrA subunits dissociate and the UvrB-DNA preincision complex is formed. This complex is subsequently bound by UvrC and the second UvrB is released. If no lesion is found, the DNA wraps around the other UvrB subunit that will check the other stand for damage. This chain is UvrABC system protein B, found in Carboxydothermus hydrogenoformans (strain ATCC BAA-161 / DSM 6008 / Z-2901).